We begin with the raw amino-acid sequence, 299 residues long: MSSYMHPLLGQELHLQRPEDSRTPPDQNNMELNRSEADEAKAETTPTGGATSSATASGSSSGRRPRGRPAGSKNKPKPPTIITRDSPNVLRSHVLEVTSGSDISEAVSTYATRRGCGVCIISGTGAVTNVTIRQPAAPAGGGVITLHGRFDILSLTGTALPPPAPPGAGGLTVYLAGGQGQVVGGNVAGSLIASGPVVLMAASFANAVYDRLPIEEEETPPPRTTGVQQQQPEASQSSEVTGSGAQACESNLQGGNGGGGVAFYNLGMNMNNFQFSGGDIYGMSGGSGGGGGGATRPAF.

Disordered regions lie at residues 1-87 (MSSY…RDSP) and 216-251 (EEET…CESN). 2 stretches are compositionally biased toward basic and acidic residues: residues 14-23 (HLQRPEDSRT) and 33-42 (NRSEADEAKA). 2 stretches are compositionally biased toward low complexity: residues 44 to 72 (TTPT…PAGS) and 224 to 239 (TTGV…QSSE). Positions 63–75 (RRPRGRPAGSKNK) form a DNA-binding region, a.T hook. In terms of domain architecture, PPC spans 87 to 233 (PNVLRSHVLE…TTGVQQQQPE (147 aa)). Residues 240–251 (VTGSGAQACESN) show a composition bias toward polar residues.

As to quaternary structure, homodimer. Interacts with AHL27 and AHL29. Expressed in seedlings, leaves, stems, floral tips and flowers.

The protein resides in the nucleus. In terms of biological role, transcription factor that specifically binds AT-rich DNA sequences related to the nuclear matrix attachment regions (MARs). Binds the DNA sequence GNFEI (GA-negative feedback element I) in the GA3OX1 promoter. Binding to GNFEI sequence is required for GA-negative feedback regulation of GA3OX1. In Arabidopsis thaliana (Mouse-ear cress), this protein is AT-hook motif nuclear-localized protein 25.